Reading from the N-terminus, the 206-residue chain is Thiamine-phosphate synthase (206 aa).

4-amino-2-methyl-5-(diphosphooxymethyl)pyrimidine is bound by residues 37–41 and Asn-69; that span reads QYRNK. 2 residues coordinate Mg(2+): Asp-70 and Asp-89. Ser-108 contributes to the 4-amino-2-methyl-5-(diphosphooxymethyl)pyrimidine binding site. 135–137 serves as a coordination point for 2-[(2R,5Z)-2-carboxy-4-methylthiazol-5(2H)-ylidene]ethyl phosphate; that stretch reads SST. Lys-138 contacts 4-amino-2-methyl-5-(diphosphooxymethyl)pyrimidine. 2-[(2R,5Z)-2-carboxy-4-methylthiazol-5(2H)-ylidene]ethyl phosphate-binding positions include Gly-165 and 185 to 186; that span reads IS.

The protein belongs to the thiamine-phosphate synthase family. Mg(2+) is required as a cofactor.

It catalyses the reaction 2-[(2R,5Z)-2-carboxy-4-methylthiazol-5(2H)-ylidene]ethyl phosphate + 4-amino-2-methyl-5-(diphosphooxymethyl)pyrimidine + 2 H(+) = thiamine phosphate + CO2 + diphosphate. It carries out the reaction 2-(2-carboxy-4-methylthiazol-5-yl)ethyl phosphate + 4-amino-2-methyl-5-(diphosphooxymethyl)pyrimidine + 2 H(+) = thiamine phosphate + CO2 + diphosphate. The enzyme catalyses 4-methyl-5-(2-phosphooxyethyl)-thiazole + 4-amino-2-methyl-5-(diphosphooxymethyl)pyrimidine + H(+) = thiamine phosphate + diphosphate. The protein operates within cofactor biosynthesis; thiamine diphosphate biosynthesis; thiamine phosphate from 4-amino-2-methyl-5-diphosphomethylpyrimidine and 4-methyl-5-(2-phosphoethyl)-thiazole: step 1/1. Condenses 4-methyl-5-(beta-hydroxyethyl)thiazole monophosphate (THZ-P) and 2-methyl-4-amino-5-hydroxymethyl pyrimidine pyrophosphate (HMP-PP) to form thiamine monophosphate (TMP). This chain is Thiamine-phosphate synthase, found in Azoarcus sp. (strain BH72).